A 1416-amino-acid polypeptide reads, in one-letter code: DNA-directed RNA polymerase subunit beta (1416 aa).

This sequence belongs to the RNA polymerase beta chain family. In terms of assembly, in plastids the minimal PEP RNA polymerase catalytic core is composed of four subunits: alpha, beta, beta', and beta''. When a (nuclear-encoded) sigma factor is associated with the core the holoenzyme is formed, which can initiate transcription.

The protein resides in the plastid. The protein localises to the chloroplast. It carries out the reaction RNA(n) + a ribonucleoside 5'-triphosphate = RNA(n+1) + diphosphate. Functionally, DNA-dependent RNA polymerase catalyzes the transcription of DNA into RNA using the four ribonucleoside triphosphates as substrates. The chain is DNA-directed RNA polymerase subunit beta from Oltmannsiellopsis viridis (Marine flagellate).